The following is a 179-amino-acid chain: ATP synthase subunit delta (179 aa).

It belongs to the ATPase delta chain family. F-type ATPases have 2 components, F(1) - the catalytic core - and F(0) - the membrane proton channel. F(1) has five subunits: alpha(3), beta(3), gamma(1), delta(1), epsilon(1). F(0) has three main subunits: a(1), b(2) and c(10-14). The alpha and beta chains form an alternating ring which encloses part of the gamma chain. F(1) is attached to F(0) by a central stalk formed by the gamma and epsilon chains, while a peripheral stalk is formed by the delta and b chains.

The protein localises to the cell membrane. F(1)F(0) ATP synthase produces ATP from ADP in the presence of a proton or sodium gradient. F-type ATPases consist of two structural domains, F(1) containing the extramembraneous catalytic core and F(0) containing the membrane proton channel, linked together by a central stalk and a peripheral stalk. During catalysis, ATP synthesis in the catalytic domain of F(1) is coupled via a rotary mechanism of the central stalk subunits to proton translocation. Its function is as follows. This protein is part of the stalk that links CF(0) to CF(1). It either transmits conformational changes from CF(0) to CF(1) or is implicated in proton conduction. In Clostridium botulinum (strain 657 / Type Ba4), this protein is ATP synthase subunit delta.